The chain runs to 384 residues: S-adenosylmethionine synthase (384 aa).

Histidine 15 lines the ATP pocket. Mg(2+) is bound at residue aspartate 17. A K(+)-binding site is contributed by glutamate 43. Residues glutamate 56 and glutamine 99 each contribute to the L-methionine site. The interval 99 to 109 (QSADINQGVDR) is flexible loop. Residues 164–166 (DAK), 230–231 (RF), aspartate 239, 245–246 (RK), alanine 262, and lysine 266 contribute to the ATP site. Position 239 (aspartate 239) interacts with L-methionine. Residue lysine 270 coordinates L-methionine.

This sequence belongs to the AdoMet synthase family. In terms of assembly, homotetramer; dimer of dimers. Mg(2+) is required as a cofactor. K(+) serves as cofactor.

It localises to the cytoplasm. It carries out the reaction L-methionine + ATP + H2O = S-adenosyl-L-methionine + phosphate + diphosphate. It participates in amino-acid biosynthesis; S-adenosyl-L-methionine biosynthesis; S-adenosyl-L-methionine from L-methionine: step 1/1. In terms of biological role, catalyzes the formation of S-adenosylmethionine (AdoMet) from methionine and ATP. The overall synthetic reaction is composed of two sequential steps, AdoMet formation and the subsequent tripolyphosphate hydrolysis which occurs prior to release of AdoMet from the enzyme. The protein is S-adenosylmethionine synthase of Haemophilus influenzae (strain ATCC 51907 / DSM 11121 / KW20 / Rd).